A 327-amino-acid polypeptide reads, in one-letter code: GMP reductase (327 aa).

The active-site Thioimidate intermediate is Cys176. 205 to 228 (IIADGGIRTHGDIAKSIRFGASMV) provides a ligand contact to NADP(+).

The protein belongs to the IMPDH/GMPR family. GuaC type 2 subfamily.

It carries out the reaction IMP + NH4(+) + NADP(+) = GMP + NADPH + 2 H(+). Functionally, catalyzes the irreversible NADPH-dependent deamination of GMP to IMP. It functions in the conversion of nucleobase, nucleoside and nucleotide derivatives of G to A nucleotides, and in maintaining the intracellular balance of A and G nucleotides. This Streptococcus pyogenes serotype M28 (strain MGAS6180) protein is GMP reductase.